The following is a 424-amino-acid chain: Light-independent protochlorophyllide reductase subunit N (424 aa).

Residues cysteine 27, cysteine 52, and cysteine 113 each coordinate [4Fe-4S] cluster.

It belongs to the BchN/ChlN family. In terms of assembly, protochlorophyllide reductase is composed of three subunits; BchL, BchN and BchB. Forms a heterotetramer of two BchB and two BchN subunits. [4Fe-4S] cluster is required as a cofactor.

It catalyses the reaction chlorophyllide a + oxidized 2[4Fe-4S]-[ferredoxin] + 2 ADP + 2 phosphate = protochlorophyllide a + reduced 2[4Fe-4S]-[ferredoxin] + 2 ATP + 2 H2O. The protein operates within porphyrin-containing compound metabolism; bacteriochlorophyll biosynthesis (light-independent). Functionally, component of the dark-operative protochlorophyllide reductase (DPOR) that uses Mg-ATP and reduced ferredoxin to reduce ring D of protochlorophyllide (Pchlide) to form chlorophyllide a (Chlide). This reaction is light-independent. The NB-protein (BchN-BchB) is the catalytic component of the complex. This is Light-independent protochlorophyllide reductase subunit N from Halorhodospira halophila (strain DSM 244 / SL1) (Ectothiorhodospira halophila (strain DSM 244 / SL1)).